Consider the following 468-residue polypeptide: 3-isopropylmalate dehydratase large subunit (468 aa).

The [4Fe-4S] cluster site is built by Cys-347, Cys-407, and Cys-410.

The protein belongs to the aconitase/IPM isomerase family. LeuC type 1 subfamily. As to quaternary structure, heterodimer of LeuC and LeuD. [4Fe-4S] cluster serves as cofactor.

It catalyses the reaction (2R,3S)-3-isopropylmalate = (2S)-2-isopropylmalate. The protein operates within amino-acid biosynthesis; L-leucine biosynthesis; L-leucine from 3-methyl-2-oxobutanoate: step 2/4. Functionally, catalyzes the isomerization between 2-isopropylmalate and 3-isopropylmalate, via the formation of 2-isopropylmaleate. The chain is 3-isopropylmalate dehydratase large subunit from Glaesserella parasuis serovar 5 (strain SH0165) (Haemophilus parasuis).